The chain runs to 468 residues: Elongation factor 1-alpha (468 aa).

One can recognise a tr-type G domain in the interval 6-244; the sequence is KPHINIVVIG…DNIPLPARPS (239 aa). Residues 15–22 form a G1 region; sequence GHVDSGKS. 15-22 provides a ligand contact to GTP; the sequence is GHVDSGKS. Residues 71-75 are G2; that stretch reads GITID. A G3 region spans residues 92–95; it reads DAPG. Residues 92–96 and 154–157 each bind GTP; these read DAPGH and NKID. The tract at residues 154–157 is G4; sequence NKID. A G5 region spans residues 195-197; sequence SGW. E303 and E376 each carry 5-glutamyl glycerylphosphorylethanolamine.

Belongs to the TRAFAC class translation factor GTPase superfamily. Classic translation factor GTPase family. EF-Tu/EF-1A subfamily.

It is found in the cytoplasm. Its function is as follows. This protein promotes the GTP-dependent binding of aminoacyl-tRNA to the A-site of ribosomes during protein biosynthesis. This chain is Elongation factor 1-alpha, found in Hydra vulgaris (Hydra).